The chain runs to 576 residues: Ecdysone receptor (576 aa).

Residues 1 to 162 (MSLGARGYRR…GPAPRQQEEL (162 aa)) are modulating. The disordered stretch occupies residues 87–154 (CTMEQQQPQP…GEARRQKKGP (68 aa)). The segment covering 91–106 (QQQPQPQQQPQQTQPL) has biased composition (low complexity). The span at 107-117 (PSMPLPMPPTT) shows a compositional bias: pro residues. 2 NR C4-type zinc fingers span residues 163–183 (CLVCGDRASGYHYNALTCEGC) and 199–223 (CKFGHACEMDIYMRRKCQECRLKKC). Residues 163–235 (CLVCGDRASG…VGMRPECVVP (73 aa)) constitute a DNA-binding region (nuclear receptor). Positions 245-269 (EKKAQREKDKLPVSTTTVDDHMPPI) are disordered. The region spanning 314-548 (NQKSLIARLV…FLEEIWDVAD (235 aa)) is the NR LBD domain.

It belongs to the nuclear hormone receptor family. NR1 subfamily.

The protein resides in the nucleus. Its function is as follows. Receptor for ecdysone. Binds to ecdysone response elements (ECRES). This is Ecdysone receptor (EcR) from Heliothis virescens (Tobacco budworm moth).